The primary structure comprises 386 residues: MFKSFNGLELKSSENEGRYLIATRDIQIGEDLLKCKSYFAVTSETLKTTSCFNCIKQLPSVIKLSLKCNQCNEIWYCNEQCKNENINKHQHYECKFYKKLKSPKLKVYPNFDIETFTEIRMIVGLLSRYYQDILLNNKFIEQQLNNNNNNNNDNEQLTNTLDDVFDLVENQVTEESNPAAKERIDSIVEFISELFNLVLLGSTTTKSIINNDDKIEMIRKINEKSRSIIHKTRCNQFGIWTKNDKCIGVAVSPSSSYFNHSCIPNCTDVRDGSNMTFKSLYPIKKGDQLTISYIELDQPIQDRKDELKYGYYFDCICPRCNGDSNSIDSMDNWISKFYCSQKKCTGLYYSKPMIPILNTLTSNHEIQLSCSNCNNINIVTPSFFNK.

Residues 6–294 enclose the SET domain; that stretch reads NGLELKSSEN…KGDQLTISYI (289 aa). An MYND-type zinc finger spans residues 51 to 94; it reads CFNCIKQLPSVIKLSLKCNQCNEIWYCNEQCKNENINKHQHYEC. Residues 136-171 adopt a coiled-coil conformation; it reads NNKFIEQQLNNNNNNNNDNEQLTNTLDDVFDLVENQ.

The protein belongs to the class V-like SAM-binding methyltransferase superfamily.

In terms of biological role, probable methyltransferase. This chain is SET and MYND domain-containing protein DDB_G0273589, found in Dictyostelium discoideum (Social amoeba).